We begin with the raw amino-acid sequence, 882 residues long: Valine--tRNA ligase (882 aa).

The 'HIGH' region signature appears at 45-55 (PNVTGKLHLGH). A 'KMSKS' region motif is present at residues 519–523 (KMSKS). Lys522 provides a ligand contact to ATP. Residues 808 to 877 (LADLLNVEEE…DATQERIVEM (70 aa)) adopt a coiled-coil conformation.

The protein belongs to the class-I aminoacyl-tRNA synthetase family. ValS type 1 subfamily. As to quaternary structure, monomer.

The protein localises to the cytoplasm. The enzyme catalyses tRNA(Val) + L-valine + ATP = L-valyl-tRNA(Val) + AMP + diphosphate. In terms of biological role, catalyzes the attachment of valine to tRNA(Val). As ValRS can inadvertently accommodate and process structurally similar amino acids such as threonine, to avoid such errors, it has a 'posttransfer' editing activity that hydrolyzes mischarged Thr-tRNA(Val) in a tRNA-dependent manner. In Streptococcus pyogenes serotype M6 (strain ATCC BAA-946 / MGAS10394), this protein is Valine--tRNA ligase.